Here is a 90-residue protein sequence, read N- to C-terminus: DNA-binding protein HU-beta (90 aa).

This sequence belongs to the bacterial histone-like protein family. As to quaternary structure, heterodimer of an alpha and a beta chain.

Histone-like DNA-binding protein which is capable of wrapping DNA to stabilize it, and thus to prevent its denaturation under extreme environmental conditions. This is DNA-binding protein HU-beta (hupB) from Escherichia coli O6:H1 (strain CFT073 / ATCC 700928 / UPEC).